The following is a 294-amino-acid chain: MFRGAASAVITPFKGNEIDYDSFDKFLKFQLDSGINGLIVLGTTGEAPTVTSEERREIISFAVKKVGGRVPVIIGTGSNSTAHSIELSQEAFELGADGVLVVTPYYNKPTQEGLYRHYEAIAKSVPGHVIIYNVPGRTGIDIIPETVLRCAQIENIVGIKEASGNQAQVDELLRLKAKVRPEFKIWSGNDDQAFHLVCSGGDGVISVLSNVAPSQTVEMIAAALEGDLEKAREIHLKLFPLMKALFIETNPIPVKFATHLLGFGSETLRLPLTEASKRTREVVKKAMQDCGVLR.

Residue threonine 44 participates in pyruvate binding. Catalysis depends on tyrosine 132, which acts as the Proton donor/acceptor. Lysine 160 acts as the Schiff-base intermediate with substrate in catalysis. A pyruvate-binding site is contributed by isoleucine 205.

It belongs to the DapA family. In terms of assembly, homotetramer; dimer of dimers.

It is found in the cytoplasm. The enzyme catalyses L-aspartate 4-semialdehyde + pyruvate = (2S,4S)-4-hydroxy-2,3,4,5-tetrahydrodipicolinate + H2O + H(+). The protein operates within amino-acid biosynthesis; L-lysine biosynthesis via DAP pathway; (S)-tetrahydrodipicolinate from L-aspartate: step 3/4. Functionally, catalyzes the condensation of (S)-aspartate-beta-semialdehyde [(S)-ASA] and pyruvate to 4-hydroxy-tetrahydrodipicolinate (HTPA). The sequence is that of 4-hydroxy-tetrahydrodipicolinate synthase from Kosmotoga olearia (strain ATCC BAA-1733 / DSM 21960 / TBF 19.5.1).